A 20-amino-acid polypeptide reads, in one-letter code: Expansin-B (20 aa).

Residues 1-20 form a disordered region; the sequence is GPPKVAPGKXISASFGGEWL.

It belongs to the expansin family. Expansin B subfamily.

The protein resides in the secreted. Its subcellular location is the cell wall. It is found in the membrane. Its function is as follows. May aid fertilization by loosening the cell wall of the stigma and style, thereby facilitating penetration of the pollen tube. Acts selectively on grass cell walls, which are relatively poor in pectins and xyloglucans and rich in glucuronoarabinoxylans and (1-3),(1-4)-beta-D-glucans, when compared with cell walls of other angiosperms, including other monocots. This Paspalum notatum (Bahia grass) protein is Expansin-B.